The primary structure comprises 401 residues: Chromatin modification-related protein EAF3 (401 aa).

The Tudor-knot domain occupies Arg13–Arg98. Over residues Thr39–Thr53 the composition is skewed to polar residues. Disordered stretches follow at residues Thr39–Glu65 and Glu117–His210. 2 stretches are compositionally biased toward basic and acidic residues: residues Lys54–Glu63 and Glu117–Gln126. Positions Ser153–Ser190 are enriched in low complexity. Ser201 carries the phosphoserine modification. An MRG domain is found at Pro216–Leu399.

This sequence belongs to the MRG family. In terms of assembly, component of the NuA4 histone acetyltransferase complex composed of at least ACT1, ARP4, YAF9, VID21, SWC4, EAF3, EAF5, EAF6, EAF7, EPL1, ESA1, TRA1 and YNG2.

Its subcellular location is the nucleus. Its function is as follows. Component of the NuA4 histone acetyltransferase complex which is involved in transcriptional activation of selected genes principally by acetylation of nucleosomal histone H4 and H2A. The NuA4 complex is also involved in DNA repair. This is Chromatin modification-related protein EAF3 (EAF3) from Saccharomyces cerevisiae (strain ATCC 204508 / S288c) (Baker's yeast).